Reading from the N-terminus, the 66-residue chain is Large ribosomal subunit protein bL31 (66 aa).

Residues Cys-16, Cys-18, Cys-36, and Cys-39 each contribute to the Zn(2+) site.

The protein belongs to the bacterial ribosomal protein bL31 family. Type A subfamily. As to quaternary structure, part of the 50S ribosomal subunit. Zn(2+) is required as a cofactor.

Binds the 23S rRNA. This chain is Large ribosomal subunit protein bL31, found in Anoxybacillus flavithermus (strain DSM 21510 / WK1).